We begin with the raw amino-acid sequence, 500 residues long: Cholesterol 24-hydroxylase (500 aa).

Residues 3-23 form a helical membrane-spanning segment; it reads PGLLLLGSAVLLAFGLCCTFV. Cys-437 serves as a coordination point for heme.

Belongs to the cytochrome P450 family. Heme is required as a cofactor. Expressed in brain. The mRNA was broadly distributed with higher levels in gray matter zones and lower levels in regions rich in white matter. Not detected in fetal sample but its expression increases linearly with age.

The protein localises to the endoplasmic reticulum membrane. It localises to the microsome membrane. It is found in the postsynapse. The protein resides in the presynapse. Its subcellular location is the cell projection. The protein localises to the dendrite. The enzyme catalyses cholesterol + reduced [NADPH--hemoprotein reductase] + O2 = (24S)-hydroxycholesterol + oxidized [NADPH--hemoprotein reductase] + H2O + H(+). It carries out the reaction cholestanol + reduced [NADPH--hemoprotein reductase] + O2 = (24S)-hydroxycholestanol + oxidized [NADPH--hemoprotein reductase] + H2O + H(+). The catalysed reaction is 7-dehydrocholesterol + reduced [NADPH--hemoprotein reductase] + O2 = cholesta-5,7-dien-3beta,24S-diol + oxidized [NADPH--hemoprotein reductase] + H2O + H(+). It catalyses the reaction 7-dehydrocholesterol + reduced [NADPH--hemoprotein reductase] + O2 = cholesta-5,7-dien-3beta,25-diol + oxidized [NADPH--hemoprotein reductase] + H2O + H(+). The enzyme catalyses desmosterol + reduced [NADPH--hemoprotein reductase] + O2 = (24Z),26-hydroxydesmosterol + oxidized [NADPH--hemoprotein reductase] + H2O + H(+). It carries out the reaction desmosterol + reduced [NADPH--hemoprotein reductase] + O2 = (24S)-25-epoxycholesterol + oxidized [NADPH--hemoprotein reductase] + H2O + H(+). The catalysed reaction is 4beta-hydroxycholesterol + reduced [NADPH--hemoprotein reductase] + O2 = 4beta,24S-dihydroxycholesterol + oxidized [NADPH--hemoprotein reductase] + H2O + H(+). It catalyses the reaction (24S)-hydroxycholesterol + reduced [NADPH--hemoprotein reductase] + O2 = (24S,25R)-24,26-dihydroxycholesterol + oxidized [NADPH--hemoprotein reductase] + H2O + H(+). The enzyme catalyses (24S)-hydroxycholesterol + reduced [NADPH--hemoprotein reductase] + O2 = 24S,25-dihydroxycholesterol + oxidized [NADPH--hemoprotein reductase] + H2O + H(+). It carries out the reaction 7alpha-hydroxycholesterol + reduced [NADPH--hemoprotein reductase] + O2 = (24S)-7alpha-dihydroxycholesterol + oxidized [NADPH--hemoprotein reductase] + H2O + H(+). The catalysed reaction is progesterone + reduced [NADPH--hemoprotein reductase] + O2 = 17alpha-hydroxyprogesterone + oxidized [NADPH--hemoprotein reductase] + H2O + H(+). It catalyses the reaction testosterone + reduced [NADPH--hemoprotein reductase] + O2 = 16beta,17beta-dihydroxyandrost-4-en-3-one + oxidized [NADPH--hemoprotein reductase] + H2O + H(+). The enzyme catalyses testosterone + reduced [NADPH--hemoprotein reductase] + O2 = 2-hydroxytestosterone + oxidized [NADPH--hemoprotein reductase] + H2O + H(+). It carries out the reaction testosterone + reduced [NADPH--hemoprotein reductase] + O2 = 6beta,17beta-dihydroxyandrost-4-en-3-one + oxidized [NADPH--hemoprotein reductase] + H2O + H(+). Its pathway is steroid metabolism; cholesterol degradation. It participates in lipid metabolism; C21-steroid hormone metabolism. In terms of biological role, P450 monooxygenase that plays a major role in cholesterol homeostasis in the brain. Primarily catalyzes the hydroxylation (with S stereochemistry) at C-24 of cholesterol side chain, triggering cholesterol diffusion out of neurons and its further degradation. By promoting constant cholesterol elimination in neurons, may activate the mevalonate pathway and coordinate the synthesis of new cholesterol and nonsterol isoprenoids involved in synaptic activity and learning. Further hydroxylates cholesterol derivatives and hormone steroids on both the ring and side chain of these molecules, converting them into active oxysterols involved in lipid signaling and biosynthesis. Acts as an epoxidase converting cholesta-5,24-dien-3beta-ol/desmosterol into (24S),25-epoxycholesterol, an abundant lipid ligand of nuclear NR1H2 and NR1H3 receptors shown to promote neurogenesis in developing brain. May also catalyze the oxidative metabolism of xenobiotics, such as clotrimazole. The chain is Cholesterol 24-hydroxylase from Homo sapiens (Human).